The chain runs to 402 residues: MAQDRKKVLVLGAGYAGLQTVTKLQKTISTEEAEITLINKNEYHYEATWLHEASAGTLNYEDVLYPVESVLKKDKVNFVQAEVTKIDRDAKKVETNQGIYDFDILVVALGFVSETFGIEGMKDHAFQIENVITARELSRHIEDKFANYAASKEKDDNDLSILVGGAGFTGVEFLGELTDRIPELCSKYGVDQNKVKITCVEAAPKMLPMFSEELVNHAVSYLEDRGVEFKIATPIVACNEKGFVVEVDGEKQQLNAGTSVWAAGVRGSKLMEESFEGVKRGRIVTKQDLTINGYDNIFVIGDCSAFIPAGEERPLPTTAQIAMQQGESVAKNIKRILNGESTEEFEYVDRGTVCSLGSHDGVGMVFGKPIAGKKAAFMKKVIDTRAVFKIGGIGLAFKKGKF.

FAD is bound by residues G12–A16, N39–K40, and V83. Residue E172 is part of the active site. FAD is bound by residues D302, A319–Q320, and K379.

This sequence belongs to the NADH dehydrogenase family. FAD is required as a cofactor.

It localises to the cell membrane. The catalysed reaction is a quinone + NADH + H(+) = a quinol + NAD(+). Alternative, nonproton pumping NADH:quinone oxidoreductase that delivers electrons to the respiratory chain by oxidation of NADH and reduction of quinones, and contributes to the regeneration of NAD(+). The sequence is that of Type II NADH:quinone oxidoreductase from Staphylococcus aureus (strain bovine RF122 / ET3-1).